The chain runs to 125 residues: Holo-[acyl-carrier-protein] synthase (125 aa).

Mg(2+) contacts are provided by aspartate 8 and glutamate 57.

It belongs to the P-Pant transferase superfamily. AcpS family. Requires Mg(2+) as cofactor.

Its subcellular location is the cytoplasm. It carries out the reaction apo-[ACP] + CoA = holo-[ACP] + adenosine 3',5'-bisphosphate + H(+). Functionally, transfers the 4'-phosphopantetheine moiety from coenzyme A to a Ser of acyl-carrier-protein. The chain is Holo-[acyl-carrier-protein] synthase from Solibacter usitatus (strain Ellin6076).